The primary structure comprises 86 residues: RNA-binding protein Hfq (86 aa).

Positions 9-68 (DPYLNTLRKEKVPVSIYLVNGIKLQGQIESFDQFVVLLKNTVSQMVYKHAISTVVPARPV) constitute a Sm domain. Residues 66-86 (RPVRLPSPSDAEHGDSEPGNA) form a disordered region. The segment covering 75 to 86 (DAEHGDSEPGNA) has biased composition (basic and acidic residues).

Belongs to the Hfq family. As to quaternary structure, homohexamer.

Its function is as follows. RNA chaperone that binds small regulatory RNA (sRNAs) and mRNAs to facilitate mRNA translational regulation in response to envelope stress, environmental stress and changes in metabolite concentrations. Also binds with high specificity to tRNAs. The chain is RNA-binding protein Hfq from Pseudomonas entomophila (strain L48).